Consider the following 1184-residue polypeptide: DNA-directed RNA polymerase subunit beta' (1184 aa).

Positions 60, 62, 75, and 78 each coordinate Zn(2+). Mg(2+)-binding residues include Asp449, Asp451, and Asp453. Zn(2+) is bound by residues Cys794, Cys867, Cys874, and Cys877. The disordered stretch occupies residues 1165–1184 (NDQQERQDKEKEETEVKASN).

This sequence belongs to the RNA polymerase beta' chain family. In terms of assembly, the RNAP catalytic core consists of 2 alpha, 1 beta, 1 beta' and 1 omega subunit. When a sigma factor is associated with the core the holoenzyme is formed, which can initiate transcription. Mg(2+) is required as a cofactor. The cofactor is Zn(2+).

The enzyme catalyses RNA(n) + a ribonucleoside 5'-triphosphate = RNA(n+1) + diphosphate. Its function is as follows. DNA-dependent RNA polymerase catalyzes the transcription of DNA into RNA using the four ribonucleoside triphosphates as substrates. This chain is DNA-directed RNA polymerase subunit beta', found in Thermoanaerobacter pseudethanolicus (strain ATCC 33223 / 39E) (Clostridium thermohydrosulfuricum).